A 692-amino-acid chain; its full sequence is Elongation factor G (692 aa).

A tr-type G domain is found at 8 to 282 (PNTRNIGIMA…NVVAYLPSPV (275 aa)). GTP is bound by residues 17-24 (AHIDAGKT), 81-85 (DTPGH), and 135-138 (NKMD).

The protein belongs to the TRAFAC class translation factor GTPase superfamily. Classic translation factor GTPase family. EF-G/EF-2 subfamily.

The protein localises to the cytoplasm. Functionally, catalyzes the GTP-dependent ribosomal translocation step during translation elongation. During this step, the ribosome changes from the pre-translocational (PRE) to the post-translocational (POST) state as the newly formed A-site-bound peptidyl-tRNA and P-site-bound deacylated tRNA move to the P and E sites, respectively. Catalyzes the coordinated movement of the two tRNA molecules, the mRNA and conformational changes in the ribosome. This is Elongation factor G from Brevibacillus brevis (strain 47 / JCM 6285 / NBRC 100599).